A 577-amino-acid polypeptide reads, in one-letter code: MNIQALLSEKVRQAMIAAGAPADCEPQVRQSAKVQFGDYQANGMMAVAKKLGMAPRQLAEQVLTHLDLNGIASKVEIAGPGFINIFLDPAFLAEHVQQALASDRLGVATPEKQTIVVDYSAPNVAKEMHVGHLRSTIIGDAAVRTLEFLGHKVIRANHVGDWGTQFGMLIAWLEKQQQENAGEMELADLEGFYRDAKKHYDEDEEFAERARNYVVKLQSGDEYFREMWRKLVDITMTQNQITYDRLNVTLTHDDVMGESLYNPMLPGIVADLKAKGLAVESEGATVVFLDEFKNKEGEPMGVIIQKKDGGYLYTTTDIACAKYRYETLHADRVLYYIDSRQHQHLMQAWAIVRKAGYVPESVPLEHHMFGMMLGKDGKPFKTRAGGTVKLADLLDEALERARRLVAEKNPDMPADELEKLANAVGIGAVKYADLSKNRTTDYIFDWDNMLAFEGNTAPYMQYAYTRVLSVFRKAEIDEEQLAAAPVIIREDREAQLAARLLQFEETLTVVAREGTPHVMCAYLYDLAGLFSGFYEHCPILSAENEEVRNSRLKLAQLTAKTLKLGLDTLGIETVERM.

Positions 122–132 (PNVAKEMHVGH) match the 'HIGH' region motif.

It belongs to the class-I aminoacyl-tRNA synthetase family. As to quaternary structure, monomer.

Its subcellular location is the cytoplasm. The enzyme catalyses tRNA(Arg) + L-arginine + ATP = L-arginyl-tRNA(Arg) + AMP + diphosphate. This Escherichia coli O157:H7 (strain EC4115 / EHEC) protein is Arginine--tRNA ligase.